The following is a 453-amino-acid chain: Bifunctional protein GlmU (453 aa).

Residues 1 to 226 (MLDILILAAG…IQEVEGINNR (226 aa)) are pyrophosphorylase. UDP-N-acetyl-alpha-D-glucosamine contacts are provided by residues 7-10 (LAAG), K21, Q72, 77-78 (GT), 99-101 (YGD), G136, E151, N166, and N224. A Mg(2+)-binding site is contributed by D101. N224 contacts Mg(2+). The interval 227-247 (QQQATLERYYQQQQARALMDA) is linker. An N-acetyltransferase region spans residues 248 to 453 (GVTLLDPARF…QGWERPTRKS (206 aa)). Residues R330 and K348 each contribute to the UDP-N-acetyl-alpha-D-glucosamine site. H360 serves as the catalytic Proton acceptor. Positions 363 and 374 each coordinate UDP-N-acetyl-alpha-D-glucosamine. Acetyl-CoA-binding positions include A377, 383-384 (NY), S402, A420, and R437.

This sequence in the N-terminal section; belongs to the N-acetylglucosamine-1-phosphate uridyltransferase family. In the C-terminal section; belongs to the transferase hexapeptide repeat family. In terms of assembly, homotrimer. The cofactor is Mg(2+).

Its subcellular location is the cytoplasm. It carries out the reaction alpha-D-glucosamine 1-phosphate + acetyl-CoA = N-acetyl-alpha-D-glucosamine 1-phosphate + CoA + H(+). The catalysed reaction is N-acetyl-alpha-D-glucosamine 1-phosphate + UTP + H(+) = UDP-N-acetyl-alpha-D-glucosamine + diphosphate. The protein operates within nucleotide-sugar biosynthesis; UDP-N-acetyl-alpha-D-glucosamine biosynthesis; N-acetyl-alpha-D-glucosamine 1-phosphate from alpha-D-glucosamine 6-phosphate (route II): step 2/2. It functions in the pathway nucleotide-sugar biosynthesis; UDP-N-acetyl-alpha-D-glucosamine biosynthesis; UDP-N-acetyl-alpha-D-glucosamine from N-acetyl-alpha-D-glucosamine 1-phosphate: step 1/1. Its pathway is bacterial outer membrane biogenesis; LPS lipid A biosynthesis. Functionally, catalyzes the last two sequential reactions in the de novo biosynthetic pathway for UDP-N-acetylglucosamine (UDP-GlcNAc). The C-terminal domain catalyzes the transfer of acetyl group from acetyl coenzyme A to glucosamine-1-phosphate (GlcN-1-P) to produce N-acetylglucosamine-1-phosphate (GlcNAc-1-P), which is converted into UDP-GlcNAc by the transfer of uridine 5-monophosphate (from uridine 5-triphosphate), a reaction catalyzed by the N-terminal domain. The chain is Bifunctional protein GlmU from Cellvibrio japonicus (strain Ueda107) (Pseudomonas fluorescens subsp. cellulosa).